We begin with the raw amino-acid sequence, 534 residues long: Endoglucanase 5 (534 aa).

An N-terminal signal peptide occupies residues 1–27 (MSDVSGRFVVAAAVVAVSLAMAAAAAA). The active-site Nucleophile is aspartate 82. Residues histidine 432, aspartate 484, and glutamate 493 contribute to the active site. Positions 515-534 (RRRGEDAPPSSTSPVAEDDL) are disordered.

It belongs to the glycosyl hydrolase 9 (cellulase E) family.

It localises to the secreted. The catalysed reaction is Endohydrolysis of (1-&gt;4)-beta-D-glucosidic linkages in cellulose, lichenin and cereal beta-D-glucans.. The polypeptide is Endoglucanase 5 (Oryza sativa subsp. japonica (Rice)).